The following is a 555-amino-acid chain: Dihydroxy-acid dehydratase (555 aa).

D78 is a Mg(2+) binding site. C119 serves as a coordination point for [2Fe-2S] cluster. Mg(2+)-binding residues include D120 and K121. K121 is modified (N6-carboxylysine). C195 contacts [2Fe-2S] cluster. A Mg(2+)-binding site is contributed by E444. S470 (proton acceptor) is an active-site residue.

It belongs to the IlvD/Edd family. As to quaternary structure, homodimer. It depends on [2Fe-2S] cluster as a cofactor. Mg(2+) is required as a cofactor.

It carries out the reaction (2R)-2,3-dihydroxy-3-methylbutanoate = 3-methyl-2-oxobutanoate + H2O. It catalyses the reaction (2R,3R)-2,3-dihydroxy-3-methylpentanoate = (S)-3-methyl-2-oxopentanoate + H2O. The protein operates within amino-acid biosynthesis; L-isoleucine biosynthesis; L-isoleucine from 2-oxobutanoate: step 3/4. Its pathway is amino-acid biosynthesis; L-valine biosynthesis; L-valine from pyruvate: step 3/4. Functionally, functions in the biosynthesis of branched-chain amino acids. Catalyzes the dehydration of (2R,3R)-2,3-dihydroxy-3-methylpentanoate (2,3-dihydroxy-3-methylvalerate) into 2-oxo-3-methylpentanoate (2-oxo-3-methylvalerate) and of (2R)-2,3-dihydroxy-3-methylbutanoate (2,3-dihydroxyisovalerate) into 2-oxo-3-methylbutanoate (2-oxoisovalerate), the penultimate precursor to L-isoleucine and L-valine, respectively. This Dehalococcoides mccartyi (strain CBDB1) protein is Dihydroxy-acid dehydratase.